Consider the following 261-residue polypeptide: DNA repair protein RecO (261 aa).

This sequence belongs to the RecO family.

Its function is as follows. Involved in DNA repair and RecF pathway recombination. This is DNA repair protein RecO from Chlorobium phaeobacteroides (strain BS1).